Consider the following 1887-residue polypeptide: Nuclear pore membrane glycoprotein 210 (1887 aa).

The N-terminal stretch at 1–26 (MAARGRGLLLLTLSVLLAAGPSAAAA) is a signal peptide. Topologically, residues 27–1808 (KLNIPKVLLP…LFQHFLDSYQ (1782 aa)) are perinuclear space. N-linked (GlcNAc...) asparagine glycosylation is found at Asn44, Asn337, Asn405, Asn484, Asn681, Asn801, Asn926, Asn1039, Asn1116, Asn1135, Asn1362, and Asn1441. Residues 1078–1151 (FPPFRLMPRK…VQAVDAETGK (74 aa)) enclose the BIG2 domain. The helical transmembrane segment at 1809-1829 (VMFFTLFALLAGTAVMIIAYH) threads the bilayer. Topologically, residues 1830–1887 (TVCTPRDLAVPAALTPRASPGHSPHYFAASSPTSPNALPPARKASPPSGLWSPAYASH) are cytoplasmic. Thr1844 is modified (phosphothreonine). Positions 1853 to 1887 (PHYFAASSPTSPNALPPARKASPPSGLWSPAYASH) are disordered. Residues Ser1874, Ser1877, Ser1881, and Ser1886 each carry the phosphoserine modification.

The protein belongs to the NUP210 family. As to quaternary structure, forms dimers and possibly higher-order oligomers. Post-translationally, N-glycosylated, but not all potential glycosylation sites may be used. Contains high-mannose type oligosaccharides. In terms of processing, phosphorylated at Ser-1881 in mitosis specifically; not phosphorylated in interphase. In terms of tissue distribution, ubiquitous expression, with highest levels in lung, liver, pancreas, testis, and ovary, intermediate levels in brain, kidney, and spleen, and lowest levels in heart and skeletal muscle.

The protein localises to the nucleus. Its subcellular location is the nuclear pore complex. It is found in the nucleus membrane. It localises to the endoplasmic reticulum membrane. Nucleoporin essential for nuclear pore assembly and fusion, nuclear pore spacing, as well as structural integrity. The polypeptide is Nuclear pore membrane glycoprotein 210 (NUP210) (Homo sapiens (Human)).